The primary structure comprises 161 residues: Globin CTT-VIIB-8 (161 aa).

The first 16 residues, 1 to 16 (MKFFAVLALCIVGAIA), serve as a signal peptide directing secretion. The 144-residue stretch at 18 to 161 (PLTADEASLV…NTYAIVVPRL (144 aa)) folds into the Globin domain. Heme b contacts are provided by His-76 and His-111.

The protein belongs to the globin family. As to quaternary structure, homodimer.

This Chironomus thummi thummi (Midge) protein is Globin CTT-VIIB-8 (CTT-7B8).